The sequence spans 209 residues: Protocatechuate 3,4-dioxygenase alpha chain (209 aa).

A 3,4-dihydroxybenzoate-binding site is contributed by R142.

This sequence belongs to the intradiol ring-cleavage dioxygenase family. In terms of assembly, the enzyme is an oligomer of 12 copies of the alpha and beta chains. Fe(3+) serves as cofactor.

The catalysed reaction is 3,4-dihydroxybenzoate + O2 = 3-carboxy-cis,cis-muconate + 2 H(+). The protein operates within aromatic compound metabolism; beta-ketoadipate pathway; 3-carboxy-cis,cis-muconate from 3,4-dihydroxybenzoate: step 1/1. Plays an essential role in the utilization of numerous aromatic and hydroaromatic compounds via the beta-ketoadipate pathway. This chain is Protocatechuate 3,4-dioxygenase alpha chain (pcaG), found in Acinetobacter baylyi (strain ATCC 33305 / BD413 / ADP1).